A 675-amino-acid chain; its full sequence is Methionine--tRNA ligase (675 aa).

The 'HIGH' region signature appears at 15–25 (PYANGSIHLGH). The Zn(2+) site is built by cysteine 146, cysteine 149, cysteine 159, and cysteine 162. The 'KMSKS' region motif lies at 332-336 (KMSKS). Residue lysine 335 participates in ATP binding. Residues 573-675 (DFAKVDMRIA…SGAQPGMQVK (103 aa)) form the tRNA-binding domain.

This sequence belongs to the class-I aminoacyl-tRNA synthetase family. MetG type 1 subfamily. Homodimer. The cofactor is Zn(2+).

The protein localises to the cytoplasm. It catalyses the reaction tRNA(Met) + L-methionine + ATP = L-methionyl-tRNA(Met) + AMP + diphosphate. Its function is as follows. Is required not only for elongation of protein synthesis but also for the initiation of all mRNA translation through initiator tRNA(fMet) aminoacylation. The chain is Methionine--tRNA ligase from Yersinia pseudotuberculosis serotype O:3 (strain YPIII).